The primary structure comprises 123 residues: MGLQETIGIEIVSVEKGKAVVQLEVTEKVHQPFGYLHGGVSVVLAEHAASIGAAKSIEPDEIVFGLEINANHLASKQAGLVTATAEAIHIGKSTQVWEIKITDETEKLLCISRCTIAVKKKRK.

Glutamate 46 acts as the Nucleophile or proton acceptor in catalysis.

The protein belongs to the thioesterase PaaI family.

It carries out the reaction 1,4-dihydroxy-2-naphthoyl-CoA + H2O = 1,4-dihydroxy-2-naphthoate + CoA + H(+). Its pathway is quinol/quinone metabolism; menaquinone biosynthesis. In terms of biological role, catalyzes the hydrolysis of 1,4-dihydroxy-2-naphthoyl-CoA (DHNA-CoA) to 1,4-dihydroxy-2-naphthoate (DHNA) and free coenzyme A. Production of DHNA is required for protection against bacteriolysis in the cytosol of macrophages and tissue-specific virulence in vivo, suggesting that MenI is required to protect the bacteria from killing in the macrophage cytosol. The protein is 1,4-dihydroxy-2-naphthoyl-CoA hydrolase of Listeria monocytogenes serotype 1/2a (strain 10403S).